Here is a 142-residue protein sequence, read N- to C-terminus: Small ribosomal subunit protein uS9 (142 aa).

It belongs to the universal ribosomal protein uS9 family.

Its subcellular location is the cytoplasm. This is Small ribosomal subunit protein uS9 (RPS16) from Syntrichia ruralis (Great hairy screw-moss).